The chain runs to 375 residues: Probable Na(+)/H(+) antiporter GerT (375 aa).

The next 10 membrane-spanning stretches (helical) occupy residues 27–47, 89–109, 112–132, 145–165, 183–203, 204–224, 226–246, 261–281, 288–308, and 350–370; these read PSVL…LGII, AGGI…FGLI, HAIF…VQTL, TILG…AFVM, IIFF…IMKM, LVPL…CFSF, YYSE…GIAI, PIAY…EITF, LWFI…GSGL, and ENFT…PPLL.

This sequence belongs to the monovalent cation:proton antiporter 2 (CPA2) transporter (TC 2.A.37) family.

The protein resides in the membrane. Functionally, contributes to the success of spore outgrowth from the germinated state during alkaline or Na(+) stress. Does not have a significant role in germination. In Bacillus cereus, this protein is Probable Na(+)/H(+) antiporter GerT (gerT).